We begin with the raw amino-acid sequence, 159 residues long: Small ribosomal subunit protein uS4 (159 aa).

One can recognise an S4 RNA-binding domain in the interval arginine 106–glutamate 158.

The protein belongs to the universal ribosomal protein uS4 family. In terms of assembly, part of the 30S ribosomal subunit. Contacts protein S5. The interaction surface between S4 and S5 is involved in control of translational fidelity.

Its function is as follows. One of the primary rRNA binding proteins, it binds directly to 16S rRNA where it nucleates assembly of the body of the 30S subunit. In terms of biological role, with S5 and S12 plays an important role in translational accuracy. This Pyrobaculum calidifontis (strain DSM 21063 / JCM 11548 / VA1) protein is Small ribosomal subunit protein uS4.